The sequence spans 282 residues: Probable endonuclease 4 (282 aa).

His67, His107, Glu144, Asp178, His181, His215, Asp228, His230, and Glu260 together coordinate Zn(2+).

This sequence belongs to the AP endonuclease 2 family. Requires Zn(2+) as cofactor.

The catalysed reaction is Endonucleolytic cleavage to 5'-phosphooligonucleotide end-products.. Functionally, endonuclease IV plays a role in DNA repair. It cleaves phosphodiester bonds at apurinic or apyrimidinic (AP) sites, generating a 3'-hydroxyl group and a 5'-terminal sugar phosphate. This chain is Probable endonuclease 4, found in Methanoculleus marisnigri (strain ATCC 35101 / DSM 1498 / JR1).